We begin with the raw amino-acid sequence, 284 residues long: MTSNRSTAWPAPAKLNLFLHVNGRRADGYHELQTLFQFIDYCDYLDFAVNDSGSLTLHSEMEAVVANSDNLILKAAKSLQEYTGTHQGAEIWLDKKLPMGGGIGGGSSDAATTLVALNHLWQTQLSQDELAKIGLSLGADVPVFINGLAAFAEGVGEKLIPVEAPENWYLILTPDVHVSTAEVFNDPLLPRDTPKLSMDDLMSSDWHNDCQPRVAERYPQVAKALAWLIEYAPSRMTGTGACVFGIFDTRQQAEHVFAKLPAGLCGFIAKGTNKSPLALRLTQH.

K14 is a catalytic residue. 98-108 (PMGGGIGGGSS) lines the ATP pocket. D140 is a catalytic residue.

The protein belongs to the GHMP kinase family. IspE subfamily.

It catalyses the reaction 4-CDP-2-C-methyl-D-erythritol + ATP = 4-CDP-2-C-methyl-D-erythritol 2-phosphate + ADP + H(+). Its pathway is isoprenoid biosynthesis; isopentenyl diphosphate biosynthesis via DXP pathway; isopentenyl diphosphate from 1-deoxy-D-xylulose 5-phosphate: step 3/6. Functionally, catalyzes the phosphorylation of the position 2 hydroxy group of 4-diphosphocytidyl-2C-methyl-D-erythritol. The chain is 4-diphosphocytidyl-2-C-methyl-D-erythritol kinase from Shewanella loihica (strain ATCC BAA-1088 / PV-4).